We begin with the raw amino-acid sequence, 200 residues long: Protein GrpE (200 aa).

Positions 1–11 (MTDNDGQKDFS) are enriched in basic and acidic residues. The tract at residues 1-43 (MTDNDGQKDFSEAAAENAGSKPGEPRVSKPYIMPDDPEETPSE) is disordered.

It belongs to the GrpE family. In terms of assembly, homodimer.

Its subcellular location is the cytoplasm. In terms of biological role, participates actively in the response to hyperosmotic and heat shock by preventing the aggregation of stress-denatured proteins, in association with DnaK and GrpE. It is the nucleotide exchange factor for DnaK and may function as a thermosensor. Unfolded proteins bind initially to DnaJ; upon interaction with the DnaJ-bound protein, DnaK hydrolyzes its bound ATP, resulting in the formation of a stable complex. GrpE releases ADP from DnaK; ATP binding to DnaK triggers the release of the substrate protein, thus completing the reaction cycle. Several rounds of ATP-dependent interactions between DnaJ, DnaK and GrpE are required for fully efficient folding. The protein is Protein GrpE of Afipia carboxidovorans (strain ATCC 49405 / DSM 1227 / KCTC 32145 / OM5) (Oligotropha carboxidovorans).